Here is a 95-residue protein sequence, read N- to C-terminus: Aspartyl/glutamyl-tRNA(Asn/Gln) amidotransferase subunit C (95 aa).

The protein belongs to the GatC family. As to quaternary structure, heterotrimer of A, B and C subunits.

The catalysed reaction is L-glutamyl-tRNA(Gln) + L-glutamine + ATP + H2O = L-glutaminyl-tRNA(Gln) + L-glutamate + ADP + phosphate + H(+). It catalyses the reaction L-aspartyl-tRNA(Asn) + L-glutamine + ATP + H2O = L-asparaginyl-tRNA(Asn) + L-glutamate + ADP + phosphate + 2 H(+). In terms of biological role, allows the formation of correctly charged Asn-tRNA(Asn) or Gln-tRNA(Gln) through the transamidation of misacylated Asp-tRNA(Asn) or Glu-tRNA(Gln) in organisms which lack either or both of asparaginyl-tRNA or glutaminyl-tRNA synthetases. The reaction takes place in the presence of glutamine and ATP through an activated phospho-Asp-tRNA(Asn) or phospho-Glu-tRNA(Gln). In Rhodospirillum centenum (strain ATCC 51521 / SW), this protein is Aspartyl/glutamyl-tRNA(Asn/Gln) amidotransferase subunit C.